The following is a 191-amino-acid chain: Peptidyl-tRNA hydrolase (191 aa).

Y17 serves as a coordination point for tRNA. Residue H22 is the Proton acceptor of the active site. 3 residues coordinate tRNA: Y68, N70, and N116.

This sequence belongs to the PTH family. Monomer.

It localises to the cytoplasm. The catalysed reaction is an N-acyl-L-alpha-aminoacyl-tRNA + H2O = an N-acyl-L-amino acid + a tRNA + H(+). Functionally, hydrolyzes ribosome-free peptidyl-tRNAs (with 1 or more amino acids incorporated), which drop off the ribosome during protein synthesis, or as a result of ribosome stalling. Its function is as follows. Catalyzes the release of premature peptidyl moieties from peptidyl-tRNA molecules trapped in stalled 50S ribosomal subunits, and thus maintains levels of free tRNAs and 50S ribosomes. The chain is Peptidyl-tRNA hydrolase from Francisella tularensis subsp. tularensis (strain FSC 198).